The chain runs to 432 residues: Asparagine--tRNA ligase (432 aa).

Belongs to the class-II aminoacyl-tRNA synthetase family. As to quaternary structure, homodimer.

It localises to the cytoplasm. It carries out the reaction tRNA(Asn) + L-asparagine + ATP = L-asparaginyl-tRNA(Asn) + AMP + diphosphate + H(+). This is Asparagine--tRNA ligase from Lactobacillus helveticus (strain DPC 4571).